The chain runs to 278 residues: Large ribosomal subunit protein uL2 (278 aa).

A disordered region spans residues 225-278 (MNPVDHPHGGGEGRTSGGRHPVTPWGKPTKGKKTRANKATDKYIVRSRHQKKKG). A compositionally biased stretch (basic residues) spans 269–278 (VRSRHQKKKG).

Belongs to the universal ribosomal protein uL2 family. Part of the 50S ribosomal subunit. Forms a bridge to the 30S subunit in the 70S ribosome.

One of the primary rRNA binding proteins. Required for association of the 30S and 50S subunits to form the 70S ribosome, for tRNA binding and peptide bond formation. It has been suggested to have peptidyltransferase activity; this is somewhat controversial. Makes several contacts with the 16S rRNA in the 70S ribosome. This chain is Large ribosomal subunit protein uL2, found in Parvibaculum lavamentivorans (strain DS-1 / DSM 13023 / NCIMB 13966).